Here is a 608-residue protein sequence, read N- to C-terminus: Probable methyltransferase PMT3 (608 aa).

The Cytoplasmic portion of the chain corresponds to 1–12 (MKGRSDGGQKKR). A helical; Signal-anchor for type II membrane protein membrane pass occupies residues 13–33 (VIALVCVAAVVLVFVYLFYGS). At 34–608 (SDHRASAIEY…LTSESLRDME (575 aa)) the chain is on the lumenal side. N342 carries N-linked (GlcNAc...) asparagine glycosylation.

The protein belongs to the methyltransferase superfamily.

It is found in the golgi apparatus membrane. The sequence is that of Probable methyltransferase PMT3 from Arabidopsis thaliana (Mouse-ear cress).